The chain runs to 206 residues: Lipid A acyltransferase PagP (206 aa).

An N-terminal signal peptide occupies residues M1–A22. A compositionally biased stretch (low complexity) spans V26–A46. Positions V26–A50 are disordered. Catalysis depends on residues H80, D123, and S124.

Belongs to the lipid A palmitoyltransferase family. Homodimer.

It is found in the cell outer membrane. It carries out the reaction a lipid A + a 1,2-diacyl-sn-glycero-3-phosphocholine = a hepta-acyl lipid A + a 2-acyl-sn-glycero-3-phosphocholine. It catalyses the reaction a lipid IVA + a 1,2-diacyl-sn-glycero-3-phosphocholine = a lipid IVB + a 2-acyl-sn-glycero-3-phosphocholine. The enzyme catalyses a lipid IIA + a 1,2-diacyl-sn-glycero-3-phosphocholine = a lipid IIB + a 2-acyl-sn-glycero-3-phosphocholine. Functionally, transfers a fatty acid residue from the sn-1 position of a phospholipid to the N-linked hydroxyfatty acid chain on the proximal unit of lipid A or its precursors. This is Lipid A acyltransferase PagP from Laribacter hongkongensis (strain HLHK9).